Consider the following 337-residue polypeptide: Cysteine proteinase 3 (337 aa).

A signal peptide spans 1–21; the sequence is MRLSITLIFTLIVLSISFISA. The propeptide at 22 to 120 is activation peptide; sequence GNVFSHKQYQ…GLRLNRPQFK (99 aa). Disulfide bonds link Cys-142–Cys-185, Cys-176–Cys-219, and Cys-277–Cys-326. Cys-145 is an active-site residue. Residues His-284 and Asn-304 contribute to the active site.

It belongs to the peptidase C1 family.

It is found in the lysosome. The chain is Cysteine proteinase 3 (cprC) from Dictyostelium discoideum (Social amoeba).